A 430-amino-acid polypeptide reads, in one-letter code: Adenosylhomocysteinase (430 aa).

3 residues coordinate substrate: T56, D131, and E156. Residue 157–159 (TTT) coordinates NAD(+). Substrate contacts are provided by K186 and D190. NAD(+)-binding positions include N191, 220 to 225 (GFGDVG), E243, N278, 299 to 301 (IGH), and N344.

This sequence belongs to the adenosylhomocysteinase family. NAD(+) is required as a cofactor.

It is found in the cytoplasm. The enzyme catalyses S-adenosyl-L-homocysteine + H2O = L-homocysteine + adenosine. The protein operates within amino-acid biosynthesis; L-homocysteine biosynthesis; L-homocysteine from S-adenosyl-L-homocysteine: step 1/1. In terms of biological role, may play a key role in the regulation of the intracellular concentration of adenosylhomocysteine. The protein is Adenosylhomocysteinase of Halorhodospira halophila (strain DSM 244 / SL1) (Ectothiorhodospira halophila (strain DSM 244 / SL1)).